A 1060-amino-acid polypeptide reads, in one-letter code: MNRSRAIVQRGRVLPPPAPLDTTNLAGRRTLQGRAKMASVPVYCLCRLPYDVTRFMIECDMCQDWFHGSCVGVEEEKAADIDLYHCPNCEVLHGPSIMKKRRGSSKGHDTHKGKPVKTGSPTFVRELRSRTFDSSDEVILKPTGNQLTVEFLEENSFSVPILVLKKDGLGMTLPSPSFTVRDVEHYVGSDKEIDVIDVTRQADCKMKLGDFVKYYYSGKREKVLNVISLEFSDTRLSNLVETPKIVRKLSWVENLWPEECVFERPNVQKYCLMSVRDSYTDFHIDFGGTSVWYHVLKGEKIFYLIRPTNANLTLFECWSSSSNQNEMFFGDQVDKCYKCSVKQGQTLFIPTGWIHAVLTPVDCLAFGGNFLHSLNIEMQLKAYEIEKRLSTADLFRFPNFETICWYVGKHILDIFRGLRENRRHPASYLVHGGKALNLAFRAWTRKEALPDHEDEIPETVRTVQLIKDLAREIRLVEDIFQQNVGKTSNIFGLQRIFPAGSIPLTRPAHSTSVSMSRLSLPSKNGSKKKGLKPKELFKKAERKGKESSALGPAGQLSYNLMDTYSHQALKTGSFQKAKFNITGACLNDSDDDSPDLDLDGNESPLALLMSNGSTKRVKSLSKSRRTKIAKKVDKARLMAEQVMEDEFDLDSDDELQIDERLGKEKATLIIRPKFPRKLPRAKPCSDPNRVREPGEVEFDIEEDYTTDEDMVEGVEGKLGNGSGAGGILDLLKASRQVGGPDYAALTEAPASPSTQEAIQGMLCMANLQSSSSSPATSSLQAWWTGGQDRSSGSSSSGLGTVSNSPASQRTPGKRPIKRPAYWRTESEEEEENASLDEQDSLGACFKDAEYIYPSLESDDDDPALKSRPKKKKNSDDAPWSPKARVTPTLPKQDRPVREGTRVASIETGLAAAAAKLAQQELQKAQKKKYIKKKPLLKEVEQPRPQDSNLSLTVPAPTVAATPQLVTSSSPLPPPEPKQEALSGSLADHEYTARPNAFGMAQANRSTTPMAPGVFLTQRRPSVGSQSNQAGQGKRPKKGLATAKQRLGRILKIHRNGKLLL.

A PHD-type zinc finger spans residues 41–92 (PVYCLCRLPYDVTRFMIECDMCQDWFHGSCVGVEEEKAADIDLYHCPNCEVL). Phosphoserine; by CDK1 is present on S69. Positions 100-120 (KRRGSSKGHDTHKGKPVKTGS) are disordered. Residues 101–115 (RRGSSKGHDTHKGKP) form a linker region. S120 bears the Phosphoserine; by CDK1 mark. One can recognise a JmjC domain in the interval 231–387 (FSDTRLSNLV…MQLKAYEIEK (157 aa)). T280 contacts substrate. Residues H283 and D285 each contribute to the Fe cation site. K300 contributes to the substrate binding site. H355 contacts Fe cation. Residues 508–517 (AHSTSVSMSR) are compositionally biased toward polar residues. Positions 508–534 (AHSTSVSMSRLSLPSKNGSKKKGLKPK) are disordered. S651 bears the Phosphoserine mark. A Phosphotyrosine modification is found at Y704. 2 positions are modified to phosphothreonine: T705 and T706. Phosphoserine is present on S722. Disordered stretches follow at residues 768-840 (QSSS…EQDS), 852-902 (YPSL…GTRV), and 915-1046 (KLAQ…KQRL). Low complexity-rich tracts occupy residues 769–778 (SSSSSPATSS) and 785–804 (GGQD…VSNS). Residues S804, S826, S834, S854, S857, and S880 each carry the phosphoserine modification. Positions 826–839 (SEEEEENASLDEQD) are enriched in acidic residues. Residues 891-900 (KQDRPVREGT) are compositionally biased toward basic and acidic residues. A compositionally biased stretch (basic residues) spans 924–934 (AQKKKYIKKKP). Residues 1018–1030 (RRPSVGSQSNQAG) show a composition bias toward polar residues.

It belongs to the JHDM1 histone demethylase family. JHDM1D subfamily. In terms of assembly, interacts with POLR1B, UBTF, SETD1A, HCFC1, E2F1 and ZNF711. Interacts with ZNF263; recruited to the SIX3 promoter along with other proteins involved in chromatin modification and transcriptional corepression where it contributes to transcriptional repression. Requires Fe(2+) as cofactor. In terms of processing, phosphorylation at Ser-69 and Ser-120 are required for dissociation from chromatin and accumulation of H4K20Me1 levels during prophase.

The protein localises to the nucleus. The protein resides in the nucleolus. The catalysed reaction is N(6),N(6)-dimethyl-L-lysyl(36)-[histone H3] + 2 2-oxoglutarate + 2 O2 = L-lysyl(36)-[histone H3] + 2 formaldehyde + 2 succinate + 2 CO2. It catalyses the reaction N(6),N(6)-dimethyl-L-lysyl(9)-[histone H3] + 2 2-oxoglutarate + 2 O2 = L-lysyl(9)-[histone H3] + 2 formaldehyde + 2 succinate + 2 CO2. Histone lysine demethylase with selectivity for the di- and monomethyl states that plays a key role cell cycle progression, rDNA transcription and brain development. Demethylates mono- and dimethylated histone H3 'Lys-9' residue (H3K9Me1 and H3K9Me2), dimethylated H3 'Lys-27' (H3K27Me2) and monomethylated histone H4 'Lys-20' residue (H4K20Me1). Acts as a transcription activator as H3K9Me1, H3K9Me2, H3K27Me2 and H4K20Me1 are epigenetic repressive marks. Involved in cell cycle progression by being required to control G1-S transition. Acts as a coactivator of rDNA transcription, by activating polymerase I (pol I) mediated transcription of rRNA genes. Required for brain development, probably by regulating expression of neuron-specific genes. Only has activity toward H4K20Me1 when nucleosome is used as a substrate and when not histone octamer is used as substrate. May also have weak activity toward dimethylated H3 'Lys-36' (H3K36Me2), however, the relevance of this result remains unsure in vivo. Specifically binds trimethylated 'Lys-4' of histone H3 (H3K4me3), affecting histone demethylase specificity: has weak activity toward H3K9Me2 in absence of H3K4me3, while it has high activity toward H3K9me2 when binding H3K4me3. Positively modulates transcription of histone demethylase KDM5C, acting synergistically with transcription factor ARX; synergy may be related to enrichment of histone H3K4me3 in regulatory elements. The protein is Histone lysine demethylase PHF8 (PHF8) of Homo sapiens (Human).